Here is a 153-residue protein sequence, read N- to C-terminus: S-ribosylhomocysteine lyase (153 aa).

His57, His61, and Cys124 together coordinate Fe cation.

This sequence belongs to the LuxS family. Homodimer. Requires Fe cation as cofactor.

The enzyme catalyses S-(5-deoxy-D-ribos-5-yl)-L-homocysteine = (S)-4,5-dihydroxypentane-2,3-dione + L-homocysteine. Its function is as follows. Involved in the synthesis of autoinducer 2 (AI-2) which is secreted by bacteria and is used to communicate both the cell density and the metabolic potential of the environment. The regulation of gene expression in response to changes in cell density is called quorum sensing. Catalyzes the transformation of S-ribosylhomocysteine (RHC) to homocysteine (HC) and 4,5-dihydroxy-2,3-pentadione (DPD). The protein is S-ribosylhomocysteine lyase of Oceanobacillus iheyensis (strain DSM 14371 / CIP 107618 / JCM 11309 / KCTC 3954 / HTE831).